A 338-amino-acid chain; its full sequence is Photosystem II assembly lipoprotein Ycf48 (338 aa).

Positions 1 to 23 (MKKIITSFPNLLLSILLCFVLSS) are cleaved as a signal peptide. The N-palmitoyl cysteine moiety is linked to residue C24. Residue C24 is the site of S-diacylglycerol cysteine attachment.

Belongs to the Ycf48 family. As to quaternary structure, part of early PSII assembly complexes which includes D1 (psbA) and PsbI; not found in mature PSII. Binds to the lumenal side of PSII complexes. Interacts with YidC.

The protein localises to the cellular thylakoid membrane. A factor required for optimal assembly of photosystem II (PSII), acting in the early stages of PSII assembly. Also plays a role in replacement of photodamaged D1 (psbA). Assists YidC in synthesis of chlorophyll-binding proteins. The sequence is that of Photosystem II assembly lipoprotein Ycf48 from Prochlorococcus marinus (strain MIT 9312).